A 112-amino-acid polypeptide reads, in one-letter code: UPF0102 protein TTHA0372 (112 aa).

This sequence belongs to the UPF0102 family.

The sequence is that of UPF0102 protein TTHA0372 from Thermus thermophilus (strain ATCC 27634 / DSM 579 / HB8).